Here is a 591-residue protein sequence, read N- to C-terminus: Phenylalanine--tRNA ligase beta subunit (591 aa).

Residues 304–380 (LSYREMTVTT…VAFGYNNLIT (77 aa)) form the B5 domain. 4 residues coordinate Mg(2+): aspartate 358, aspartate 364, glutamate 367, and aspartate 368.

Belongs to the phenylalanyl-tRNA synthetase beta subunit family. Type 2 subfamily. Tetramer of two alpha and two beta subunits. Requires Mg(2+) as cofactor.

It is found in the cytoplasm. It catalyses the reaction tRNA(Phe) + L-phenylalanine + ATP = L-phenylalanyl-tRNA(Phe) + AMP + diphosphate + H(+). This Caenorhabditis elegans protein is Phenylalanine--tRNA ligase beta subunit.